The primary structure comprises 89 residues: Small ribosomal subunit protein uS15 (89 aa).

It belongs to the universal ribosomal protein uS15 family. As to quaternary structure, part of the 30S ribosomal subunit. Forms a bridge to the 50S subunit in the 70S ribosome, contacting the 23S rRNA.

In terms of biological role, one of the primary rRNA binding proteins, it binds directly to 16S rRNA where it helps nucleate assembly of the platform of the 30S subunit by binding and bridging several RNA helices of the 16S rRNA. Its function is as follows. Forms an intersubunit bridge (bridge B4) with the 23S rRNA of the 50S subunit in the ribosome. The chain is Small ribosomal subunit protein uS15 from Latilactobacillus sakei subsp. sakei (strain 23K) (Lactobacillus sakei subsp. sakei).